The following is a 205-amino-acid chain: Protein N-terminal glutamine amidohydrolase (205 aa).

Residues Cys20, His74, and Asp90 contribute to the active site.

This sequence belongs to the NTAQ1 family. Monomer.

It carries out the reaction N-terminal L-glutaminyl-[protein] + H2O = N-terminal L-glutamyl-[protein] + NH4(+). Functionally, mediates the side-chain deamidation of N-terminal glutamine residues to glutamate, an important step in N-end rule pathway of protein degradation. Conversion of the resulting N-terminal glutamine to glutamate renders the protein susceptible to arginylation, polyubiquitination and degradation as specified by the N-end rule. Does not act on substrates with internal or C-terminal glutamine and does not act on non-glutamine residues in any position. This is Protein N-terminal glutamine amidohydrolase (tun) from Drosophila pseudoobscura pseudoobscura (Fruit fly).